The sequence spans 251 residues: Regulator of G-protein signaling 9-binding protein C (251 aa).

At methionine 1–glutamine 230 the chain is on the cytoplasmic side. Coiled coils occupy residues leucine 53–arginine 94 and alanine 158–asparagine 187. Residues leucine 231–isoleucine 250 form a helical; Anchor for type IV membrane protein membrane-spanning segment. A topological domain (extracellular) is located at residue leucine 251.

The protein belongs to the RGS7BP/RGS9BP family.

It localises to the membrane. Regulator of G protein-coupled receptor (GPCR) signaling. Probably acts by regulating the activity of some 'R7' family protein (RGS6, RGS7, RGS9 and/or RGS11). The protein is Regulator of G-protein signaling 9-binding protein C (rgs9bp-c) of Xenopus laevis (African clawed frog).